The chain runs to 272 residues: Dermonecrotic toxin LvSicTox-alphaIC1biv (272 aa).

Histidine 5 is a catalytic residue. Mg(2+) contacts are provided by glutamate 25 and aspartate 27. Histidine 41 serves as the catalytic Nucleophile. Cystine bridges form between cysteine 45/cysteine 51 and cysteine 47/cysteine 189. Mg(2+) is bound at residue aspartate 84.

This sequence belongs to the arthropod phospholipase D family. Class II subfamily. The cofactor is Mg(2+). In terms of tissue distribution, expressed by the venom gland.

It localises to the secreted. The enzyme catalyses an N-(acyl)-sphingosylphosphocholine = an N-(acyl)-sphingosyl-1,3-cyclic phosphate + choline. It carries out the reaction an N-(acyl)-sphingosylphosphoethanolamine = an N-(acyl)-sphingosyl-1,3-cyclic phosphate + ethanolamine. The catalysed reaction is a 1-acyl-sn-glycero-3-phosphocholine = a 1-acyl-sn-glycero-2,3-cyclic phosphate + choline. It catalyses the reaction a 1-acyl-sn-glycero-3-phosphoethanolamine = a 1-acyl-sn-glycero-2,3-cyclic phosphate + ethanolamine. Functionally, dermonecrotic toxins cleave the phosphodiester linkage between the phosphate and headgroup of certain phospholipids (sphingolipid and lysolipid substrates), forming an alcohol (often choline) and a cyclic phosphate. This toxin acts on sphingomyelin (SM). It may also act on ceramide phosphoethanolamine (CPE), lysophosphatidylcholine (LPC) and lysophosphatidylethanolamine (LPE), but not on lysophosphatidylserine (LPS), and lysophosphatidylglycerol (LPG). It acts by transphosphatidylation, releasing exclusively cyclic phosphate products as second products. Induces dermonecrosis, hemolysis, increased vascular permeability, edema, inflammatory response, and platelet aggregation. This is Dermonecrotic toxin LvSicTox-alphaIC1biv from Loxosceles variegata (Recluse spider).